A 172-amino-acid polypeptide reads, in one-letter code: Shikimate kinase (172 aa).

14–19 lines the ATP pocket; the sequence is GAGKST. Ser18 contributes to the Mg(2+) binding site. Residues Asp36, Arg60, and Gly82 each contribute to the substrate site. Arg120 is a binding site for ATP. Arg140 provides a ligand contact to substrate. ATP is bound at residue Gln157.

This sequence belongs to the shikimate kinase family. Monomer. The cofactor is Mg(2+).

It localises to the cytoplasm. It catalyses the reaction shikimate + ATP = 3-phosphoshikimate + ADP + H(+). Its pathway is metabolic intermediate biosynthesis; chorismate biosynthesis; chorismate from D-erythrose 4-phosphate and phosphoenolpyruvate: step 5/7. Catalyzes the specific phosphorylation of the 3-hydroxyl group of shikimic acid using ATP as a cosubstrate. In Colwellia psychrerythraea (strain 34H / ATCC BAA-681) (Vibrio psychroerythus), this protein is Shikimate kinase.